We begin with the raw amino-acid sequence, 386 residues long: Cytochrome b (386 aa).

Transmembrane regions (helical) follow at residues leucine 32–methionine 52, tryptophan 76–glycine 98, valine 113–cysteine 133, and phenylalanine 179–methionine 199. Heme b-binding residues include histidine 82 and histidine 96. Heme b contacts are provided by histidine 183 and histidine 197. Histidine 202 serves as a coordination point for a ubiquinone. 4 helical membrane passes run phenylalanine 225–phenylalanine 245, leucine 289–aspartate 309, phenylalanine 321–glutamate 341, and phenylalanine 348–proline 368.

It belongs to the cytochrome b family. In terms of assembly, fungal cytochrome b-c1 complex contains 10 subunits; 3 respiratory subunits, 2 core proteins and 5 low-molecular weight proteins. Cytochrome b-c1 complex is a homodimer. Heme b is required as a cofactor.

It localises to the mitochondrion inner membrane. Its function is as follows. Component of the ubiquinol-cytochrome c reductase complex (complex III or cytochrome b-c1 complex) that is part of the mitochondrial respiratory chain. The b-c1 complex mediates electron transfer from ubiquinol to cytochrome c. Contributes to the generation of a proton gradient across the mitochondrial membrane that is then used for ATP synthesis. In Kluyveromyces lactis (strain ATCC 8585 / CBS 2359 / DSM 70799 / NBRC 1267 / NRRL Y-1140 / WM37) (Yeast), this protein is Cytochrome b (COB).